The following is a 570-amino-acid chain: Formate--tetrahydrofolate ligase (570 aa).

Position 65–72 (65–72 (TPYGEGKT)) interacts with ATP.

It belongs to the formate--tetrahydrofolate ligase family.

The enzyme catalyses (6S)-5,6,7,8-tetrahydrofolate + formate + ATP = (6R)-10-formyltetrahydrofolate + ADP + phosphate. It functions in the pathway one-carbon metabolism; tetrahydrofolate interconversion. This is Formate--tetrahydrofolate ligase from Shewanella piezotolerans (strain WP3 / JCM 13877).